We begin with the raw amino-acid sequence, 242 residues long: MAKRGKRYQQLLSLIEKGRLYSPKEAVSLVKKLATAKFDETINLAVRLGVDPRHADQQVRGTVVLPYGTGKEKKVLVFAEGEKAQEAREAGADYVGGEDLVKQIESGWLDFDVAIATPDIMGTLKIPSRLGKILGPRGLMPNPKTGTVTNDIAKAVKEYKAGRVEFRTDRYGIVHVPIGKASFSEEALYKNLMTVLGTLLRLKPAAAKGQYFKSIYISPSMGPSVPIDTKNIADLVKQEEAA.

Belongs to the universal ribosomal protein uL1 family. As to quaternary structure, part of the 50S ribosomal subunit.

In terms of biological role, binds directly to 23S rRNA. The L1 stalk is quite mobile in the ribosome, and is involved in E site tRNA release. Functionally, protein L1 is also a translational repressor protein, it controls the translation of the L11 operon by binding to its mRNA. The chain is Large ribosomal subunit protein uL1 from Dictyoglomus turgidum (strain DSM 6724 / Z-1310).